Here is a 290-residue protein sequence, read N- to C-terminus: Flap endonuclease Xni (290 aa).

Aspartate 125 contacts Mg(2+). The region spanning 181–275 is the 5'-3' exonuclease domain; that stretch reads VKTSQLIDFW…DIRLTTSSSA (95 aa). Positions 192, 203, and 206 each coordinate K(+). The interaction with DNA stretch occupies residues 205–210; sequence GIGQVT.

It belongs to the Xni family. The cofactor is Mg(2+). Requires K(+) as cofactor.

In terms of biological role, has flap endonuclease activity. During DNA replication, flap endonucleases cleave the 5'-overhanging flap structure that is generated by displacement synthesis when DNA polymerase encounters the 5'-end of a downstream Okazaki fragment. The protein is Flap endonuclease Xni of Colwellia psychrerythraea (strain 34H / ATCC BAA-681) (Vibrio psychroerythus).